The primary structure comprises 4042 residues: Polyketide synthase-nonribosomal peptide synthetase phmA (4042 aa).

In terms of domain architecture, Ketosynthase family 3 (KS3) spans 10–411 (NEPIAIVGSA…GANAHAILEA (402 aa)). The tract at residues 519-837 (VFTGQGAQWA…TGLLSRDRDD (319 aa)) is acyl transferase. The N-terminal hotdog fold stretch occupies residues 909-1042 (HELLGTKCPD…GRISALFGPP (134 aa)). Positions 909-1208 (HELLGTKCPD…LHTKPLGHAT (300 aa)) are dehydratase (DH) domain. In terms of domain architecture, PKS/mFAS DH spans 909–1210 (HELLGTKCPD…TKPLGHATPE (302 aa)). The Proton acceptor; for dehydratase activity role is filled by His941. The tract at residues 1057-1210 (MIDVDPEQFY…TKPLGHATPE (154 aa)) is C-terminal hotdog fold. Residue Asp1117 is the Proton donor; for dehydratase activity of the active site. The tract at residues 1349-1572 (DDMLNDFYVK…VDEHVEFIRN (224 aa)) is methyltransferase (MT) domain. A ketoreductase (KR)domain region spans residues 2073–2246 (TYWLVGLTGG…AGSVINIGAI (174 aa)). The 83-residue stretch at 2351–2433 (ATTADEVNEA…ELVSAAQEQL (83 aa)) folds into the Carrier 1 domain. Ser2393 carries the post-translational modification O-(pantetheine 4'-phosphoryl)serine. 2 disordered regions span residues 2460–2504 (KTET…SKDA) and 2535–2554 (ATRS…PEND). The span at 2479–2490 (EVDEEEQEEDEA) shows a compositional bias: acidic residues. Polar residues predominate over residues 2495–2504 (NFFSSASKDA). Low complexity predominate over residues 2536–2549 (TRSKTSSSSSSFTS). Positions 2584–3019 (RVSPMSFGQA…LGRPPLYDPQ (436 aa)) are condensation. The tract at residues 3047 to 3443 (EMASRFGSQI…TADGLVLEGR (397 aa)) is adenylation. One can recognise a Carrier 2 domain in the interval 3562-3642 (KENKSPESEL…AMLNLISPAS (81 aa)). Residue Ser3602 is modified to O-(pantetheine 4'-phosphoryl)serine. Residues 3703–3924 (ITGASGFLGK…DFVSVESVAH (222 aa)) are reductase-like.

Belongs to the NRP synthetase family.

Its pathway is mycotoxin biosynthesis. In terms of biological role, hybrid PKS-NRPS synthetase; part of the gene cluster that mediates the biosynthesis of the mycotoxins phomacins, leucine-derived cytochalasans with potent actin polymerization-inhibitory activities and monocot-specific antigerminative activities. The first step in the pathway is catalyzed by the hybrid PKS-NRPS phmA, assisted by the enoyl reductase phmE, that are responsible for fusion of the leucine precursor and the polyketide backbone to produce a 2-pyrrolidone intermediate. The polyketide synthase module (PKS) of phmA is responsible for the synthesis of the polyketide backbone and the downstream nonribosomal peptide synthetase (NRPS) amidates the carboxyl end of the polyketide with the leucine precursor. Because phmA lacks a designated enoylreductase (ER) domain, the required activity is provided the enoyl reductase phmE. Reduction by the hydrolyase phmG, followed by dehydration and intra-molecular Diels-Alder cyclization by the Diels-Alderase phmD then yield the required isoindolone-fused macrocycle. A number of oxidative steps catalyzed by the tailoring cytochrome P450 monooxygenase phmB, the FAD-linked oxidoreductase phmC and the short-chain dehydrogenase/reductase phmF, are further required to afford the final products, phomacin D and phomacin E. The chain is Polyketide synthase-nonribosomal peptide synthetase phmA from Phaeosphaeria nodorum (strain SN15 / ATCC MYA-4574 / FGSC 10173) (Glume blotch fungus).